The sequence spans 414 residues: Putative ankyrin repeat protein BB_B28 (414 aa).

2 ANK repeats span residues N326 to L355 and N359 to I389.

This chain is Putative ankyrin repeat protein BB_B28, found in Borreliella burgdorferi (strain ATCC 35210 / DSM 4680 / CIP 102532 / B31) (Borrelia burgdorferi).